The primary structure comprises 287 residues: 4-diphosphocytidyl-2-C-methyl-D-erythritol kinase (287 aa).

The active site involves Lys14. Pro96–Ser106 serves as a coordination point for ATP. Asp138 is an active-site residue.

This sequence belongs to the GHMP kinase family. IspE subfamily.

It catalyses the reaction 4-CDP-2-C-methyl-D-erythritol + ATP = 4-CDP-2-C-methyl-D-erythritol 2-phosphate + ADP + H(+). It functions in the pathway isoprenoid biosynthesis; isopentenyl diphosphate biosynthesis via DXP pathway; isopentenyl diphosphate from 1-deoxy-D-xylulose 5-phosphate: step 3/6. Functionally, catalyzes the phosphorylation of the position 2 hydroxy group of 4-diphosphocytidyl-2C-methyl-D-erythritol. The polypeptide is 4-diphosphocytidyl-2-C-methyl-D-erythritol kinase (Methylibium petroleiphilum (strain ATCC BAA-1232 / LMG 22953 / PM1)).